We begin with the raw amino-acid sequence, 162 residues long: Proepiregulin (162 aa).

The signal sequence occupies residues 1–22 (METLPASWVLTLLCLGSHLLQA). Residues 23–55 (VISTTVIPSCIPGESEDNCTALVQMEDDPRVAQ) constitute a propeptide that is removed on maturation. Residue Asn-40 is glycosylated (N-linked (GlcNAc...) asparagine). Topologically, residues 53-112 (VAQVQITKCSSDMDGYCLHGQCIYLVDMREKFCRCEVGYTGLRCEHFFLTVHQPLSKEYV) are extracellular. The EGF-like domain occupies 57–97 (QITKCSSDMDGYCLHGQCIYLVDMREKFCRCEVGYTGLRCE). 3 disulfide bridges follow: Cys-61-Cys-74, Cys-69-Cys-85, and Cys-87-Cys-96. A propeptide spans 102-162 (TVHQPLSKEY…TSGDPVLPQV (61 aa)) (removed in mature form). A helical membrane pass occupies residues 113–133 (ALTVILIFLFLIITAGCIYYF). At 134–162 (CRWYKNRKSKKSREEYERVTSGDPVLPQV) the chain is on the cytoplasmic side.

As to quaternary structure, interacts with EGFR and ERBB4.

It localises to the secreted. The protein resides in the extracellular space. It is found in the cell membrane. Functionally, ligand of the EGF receptor/EGFR and ERBB4. Stimulates EGFR and ERBB4 tyrosine phosphorylation. Contributes to inflammation, wound healing, tissue repair, and oocyte maturation by regulating angiogenesis and vascular remodeling and by stimulating cell proliferation. The protein is Proepiregulin (Ereg) of Mus musculus (Mouse).